A 126-amino-acid polypeptide reads, in one-letter code: uncharacterized protein (126 aa).

At 1–28 (MAGEAVSEHTPDSQEVTVTSVVCCLDSV) the chain is on the cytoplasmic side. The chain crosses the membrane as a helical span at residues 29-49 (VEIGHHVVYSVVTPLIVAVLI). At 50 to 75 (DTMAGEAVLEHTSDSQEEIVTTVVCS) the chain is on the extracellular side. The helical transmembrane segment at 76-96 (VVPLVCFVVSVVCFVISVVEI) threads the bilayer. Position 97 (glycine 97) is a topological domain, cytoplasmic. Residues 98–118 (HHVVYSVVAPLTVTVAVETIA) form a helical membrane-spanning segment. Topologically, residues 119-126 (EEMDSVHT) are extracellular.

It localises to the membrane. This is an uncharacterized protein from Saccharomyces cerevisiae (strain ATCC 204508 / S288c) (Baker's yeast).